A 265-amino-acid chain; its full sequence is Mlc titration factor A (265 aa).

4 residues coordinate Zn(2+): H111, H148, H152, and E211.

This sequence belongs to the MtfA family. As to quaternary structure, interacts with Mlc. Zn(2+) is required as a cofactor.

Its subcellular location is the cytoplasm. In terms of biological role, involved in the modulation of the activity of the glucose-phosphotransferase system (glucose-PTS). Interacts with the transcriptional repressor Mlc, preventing its interaction with DNA and leading to the modulation of expression of genes regulated by Mlc, including ptsG, which encodes the PTS system glucose-specific EIICB component. Shows zinc-dependent metallopeptidase activity. This Escherichia coli O127:H6 (strain E2348/69 / EPEC) protein is Mlc titration factor A.